The primary structure comprises 637 residues: Rab11 family-interacting protein 4 (637 aa).

One can recognise an EF-hand domain in the interval 49 to 84 (GQGEEVEKLVKYLDPNDLGRINFKDFCRGVFAMKGC). 4 residues coordinate Ca(2+): Asp-62, Asn-64, Arg-68, and Asp-73. A necessary for interaction with RAB11A, subcellular location, homo- or heterooligomerization region spans residues 82-637 (KGCEELLKDV…HNPSILEIKH (556 aa)). Disordered regions lie at residues 138–175 (EEEA…PAEK) and 219–256 (YGEG…SAGQ). Residues 280-617 (KINLLNDLEA…EEINFRLRQY (338 aa)) adopt a coiled-coil conformation. In terms of domain architecture, FIP-RBD spans 574 to 636 (EAKNLFAAQT…DHNPSILEIK (63 aa)).

As to quaternary structure, homodimer. Forms a complex with Rab11 (RAB11A or RAB11B) and ARF6. Interacts with RAB11A; the interaction is direct. Forms a heterooligomeric complex with RAB11FIP2, RAB11FIP3 and RAB11FIP5. Interacts with ECPAS. In terms of assembly, (Microbial infection) Interacts with human cytomegalovirus/HHV-5 protein gM/UL100. In terms of tissue distribution, present at high level in testis (at protein level). Weakly expressed in other tissues.

It localises to the endosome. It is found in the cytoplasm. Its subcellular location is the cytoskeleton. The protein resides in the spindle. The protein localises to the microtubule organizing center. It localises to the centrosome. It is found in the recycling endosome membrane. Its subcellular location is the cleavage furrow. The protein resides in the midbody. The protein localises to the cytoplasmic vesicle. Functionally, acts as a regulator of endocytic traffic by participating in membrane delivery. Required for the abscission step in cytokinesis, possibly by acting as an 'address tag' delivering recycling endosome membranes to the cleavage furrow during late cytokinesis. In case of infection by HCMV (human cytomegalovirus), may participate in egress of the virus out of nucleus; this function is independent of ARF6. The sequence is that of Rab11 family-interacting protein 4 (RAB11FIP4) from Homo sapiens (Human).